Here is a 454-residue protein sequence, read N- to C-terminus: Nucleoprotein (454 aa).

Residues 1 to 62 (MSFVPGQENA…ATTQPNSGSV (62 aa)) are disordered. Over residues 10–23 (AGGRSSSGNRAGNG) the composition is skewed to low complexity. Polar residues predominate over residues 50–61 (KQTATTQPNSGS). An RNA-binding region spans residues 56-197 (QPNSGSVVPH…GFYVEGSGRS (142 aa)). Residues 64–193 (PHYSWFSGIT…VLPQGFYVEG (130 aa)) form the CoV N NTD domain. Residues Arg-109 and Arg-125 each contribute to the RNA site. Disordered stretches follow at residues 160 to 179 (TRSD…PTRF), 186 to 230 (PQGF…STVK), 271 to 292 (PRQK…KRGP), and 382 to 428 (DGGA…RELT). The residue at position 162 (Ser-162) is a Phosphoserine; by host. Position 167 (Arg-167) interacts with RNA. The residue at position 170 (Ser-170) is a Phosphoserine; by host. Position 177 is a phosphothreonine; by host (Thr-177). The segment covering 193–212 (GSGRSAPASRSGSRSQSRGP) has biased composition (low complexity). Ser-194 carries the phosphoserine; by host modification. A compositionally biased stretch (polar residues) spans 215–227 (RARSSSNQRQPAS). One can recognise a CoV N CTD domain in the interval 260–383 (AKEVRQKILN…ENLNAYQKDG (124 aa)). The tract at residues 267–383 (ILNKPRQKRT…ENLNAYQKDG (117 aa)) is dimerization. 2 positions are modified to phosphoserine; by host: Ser-389 and Ser-424. At Thr-428 the chain carries Phosphothreonine; by host.

This sequence belongs to the betacoronavirus nucleocapsid protein family. In terms of assembly, homooligomer. Both monomeric and oligomeric forms interact with RNA. Interacts with protein M. Interacts with NSP3; this interaction serves to tether the genome to the newly translated replicase-transcriptase complex at a very early stage of infection. Post-translationally, ADP-ribosylated. The ADP-ribosylation is retained in the virion during infection. Phosphorylated on serine and threonine residues.

Its subcellular location is the virion. It localises to the host endoplasmic reticulum-Golgi intermediate compartment. The protein localises to the host Golgi apparatus. In terms of biological role, major structural component of virions that associates with genomic RNA to form a long, flexible, helical nucleocapsid. Interaction with the M protein leads to the formation of virus particles. Binds to cellular membranes and phospholipids. Elicits cell-mediated immunity. May play roles in viral transcription and translation, and/or replication. Induces transcription of the prothrombinase (FGL2) and elevates procoagulant activity. Functionally, packages the positive strand viral genome RNA into a helical ribonucleocapsid (RNP) and plays a fundamental role during virion assembly through its interactions with the viral genome and membrane protein M. Plays an important role in enhancing the efficiency of subgenomic viral RNA transcription as well as viral replication. This Mus musculus (Mouse) protein is Nucleoprotein.